We begin with the raw amino-acid sequence, 1071 residues long: MPAIMTMLADHAARQLLDFSQKLDINLLDNVVNCLYHGEGAQQRMAQEVLTHLKEHPDAWTRVDTILEFSQNMNTKYYGLQILENVIKTRWKILPRNQCEGIKKYVVGLIIKTSSDPTCVEKEKVYIGKLNMILVQILKQEWPKHWPTFISDIVGASRTSESLCQNNMVILKLLSEEVFDFSSGQITQVKAKHLKDSMCNEFSQIFQLCQFVMENSQNAPLVHATLETLLRFLNWIPLGYIFETKLISTLIYKFLNVPMFRNVSLKCLTEIAGVSVSQYEEQFETLFTLTMMQLKQMLPLNTNIRLAYSNGKDDEQNFIQNLSLFLCTFLKEHGQLLEKRLNLREALMEALHYMLLVSEVEETEIFKICLEYWNHLAAELYRESPFSTSASPLLSGSQHFDIPPRRQLYLTVLSKVRLLMVSRMAKPEEVLVVENDQGEVVREFMKDTDSINLYKNMRETLVYLTHLDYVDTEIIMTKKLQNQVNGTEWSWKNLNTLCWAIGSISGAMHEEDEKRFLVTVIKDLLGLCEQKRGKDNKAIIASNIMYIVGQYPRFLRAHWKFLKTVVNKLFEFMHETHDGVQDMACDTFIKIAQKCRRHFVQVQVGEVMPFIDEILNNINTIICDLQPQQVHTFYEAVGYMIGAQTDQTVQEHLIEKYMLLPNQVWDSIIQQATKNVDILKDPETVKQLGSILKTNVRACKAVGHPFVIQLGRIYLDMLNVYKCLSENISAAIQANGEMVTKQPLIRSMRTVKRETLKLISGWVSRSNDPQMVAENFVPPLLDAVLIDYQRNVPAAREPEVLSTMAIIVNKLGGHITAEIPQIFDAVFECTLNMINKDFEEYPEHRTNFFLLLQAVNSHCFPAFLAIPPAQFKLVLDSIIWAFKHTMRNVADTGLQILFTLLQNVAQEEAAAQSFYQTYFCDILQHIFSVVTDTSHTAGLTMHASILAYMFNLVEEGKISTPLNPGSPVSNQMFIQDYVANLLKSAFPHLQDAQVKLFVTGLFSLNQDIPAFKEHLRDFLVQIKEFAGEDTSDLFLEERETALRQAQEEKHKLQMSVPGILNPHEIPEEMCD.

The Importin N-terminal domain maps to 46-112; that stretch reads AQEVLTHLKE…KKYVVGLIIK (67 aa). HEAT repeat units follow at residues 217–240, 241–277, 354–472, 515–553, 560–597, and 602–639; these read QNAPLVHATLETLLRFLNWIPLGY, IFETKLISTLIYKFLNVPMFRNVSLKCLTEIAGVSVS, MLLV…YVDT, RFLVTVIKDLLGLCEQKRGKDNKAIIASNIMYIVGQYPR, KFLKTVVNKLFEFMHETHDGVQDMACDTFIKIAQKCRR, and VQVGEVMPFIDEILNNINTIICDLQPQQVHTFYEAVGY. Positions 327–450 are necessary for interaction with Ran and nuclear export complex formation; the sequence is CTFLKEHGQL…VREFMKDTDS (124 aa). Phosphoserine is present on Ser391. The tract at residues 411–481 is necessary for interaction with RANBP3; it reads TVLSKVRLLM…TEIIMTKKLQ (71 aa). Lys446 is subject to N6-acetyllysine. Thr448 is subject to Phosphothreonine. Ser450 is modified (phosphoserine). A Phosphotyrosine modification is found at Tyr454. Lys693 is modified (N6-acetyllysine). 3 HEAT repeats span residues 775–813, 885–916, and 917–954; these read NFVPPLLDAVLIDYQRNVPAAREPEVLSTMAIIVNKLGG, TMRNVADTGLQILFTLLQNVAQEEAAAQSFYQ, and TYFCDILQHIFSVVTDTSHTAGLTMHASILAYMFNLVE. Ser966 and Ser1031 each carry phosphoserine. The stretch at 1002–1039 is one HEAT 10 repeat; that stretch reads FSLNQDIPAFKEHLRDFLVQIKEFAGEDTSDLFLEERE.

Belongs to the exportin family. As to quaternary structure, found in a U snRNA export complex with PHAX/RNUXA, NCBP1/CBP80, NCBP2/CBP20, RAN, XPO1 and m7G-capped RNA. Component of a nuclear export receptor complex composed of KPNB1, RAN, SNUPN and XPO1. Found in a trimeric export complex with SNUPN, RAN and XPO1. Found in a nuclear export complex with RANBP3 and RAN. Found in a 60S ribosomal subunit export complex with NMD3, RAN, XPO1. Interacts with DDX3X, NMD3, NUP42, NUP88, NUP214, RANBP3 and TERT. Interacts with NEMF (via its N-terminus). Interacts with the monomeric form of BIRC5/survivin deacetylated at 'Lys-129'. Interacts with DTNBP1 and SERTAD2; the interactions translocate DTNBP1 and SERTAD2 out of the nucleus. Interacts with ATF2. Interacts with SLC35G1 and STIM1. Interacts with DCAF8. Interacts with CPEB3. Interacts with HAX1. Interacts with BOK; translocates to the cytoplasm. Interacts with HSP90AB1. Interacts with LRPPRC; interacts with LRPPRC alone and also when LRPPRC is in complex with EIF4E and with EIF4E sensitivity element (4ESE)-containing mRNAs to form an EIF4E-dependent mRNA export complex.

Its subcellular location is the cytoplasm. It localises to the nucleus. The protein resides in the nucleoplasm. It is found in the cajal body. The protein localises to the nucleolus. Functionally, mediates the nuclear export of cellular proteins (cargos) bearing a leucine-rich nuclear export signal (NES) and of RNAs. In the nucleus, in association with RANBP3, binds cooperatively to the NES on its target protein and to the GTPase Ran in its active GTP-bound form. Docking of this complex to the nuclear pore complex (NPC) is mediated through binding to nucleoporins. Upon transit of a nuclear export complex into the cytoplasm, disassembling of the complex and hydrolysis of Ran-GTP to Ran-GDP (induced by RANBP1 and RANGAP1, respectively) cause release of the cargo from the export receptor. The directionality of nuclear export is thought to be conferred by an asymmetric distribution of the GTP- and GDP-bound forms of Ran between the cytoplasm and nucleus. Involved in U3 snoRNA transport from Cajal bodies to nucleoli. Binds to late precursor U3 snoRNA bearing a TMG cap. The polypeptide is Exportin-1 (Xpo1) (Rattus norvegicus (Rat)).